Reading from the N-terminus, the 1224-residue chain is WD repeat-containing protein 11 (1224 aa).

WD repeat units follow at residues 59–108 (KHKA…AQCE) and 111–154 (EHAK…KLWK). Ser205 and Ser209 each carry phosphoserine. One copy of the WD 3 repeat lies at 354-393 (KTVRPFSMVCCPVNENAAALVVSDGRVMIWELKSAVCNRN). 2 positions are modified to phosphoserine: Ser402 and Ser406. 6 WD repeats span residues 471 to 510 (RMCP…LHKE), 566 to 605 (NDES…LLRE), 708 to 745 (GSMG…SRGI), 747 to 787 (THRS…MVSS), 793 to 831 (NVTF…ACFR), and 893 to 940 (SLSN…HSLS).

In terms of assembly, component of the complex WDR11 composed of C17orf75, FAM91A1 and WDR11; FAM91A1 and WDR11 are required for proper location of the complex. Interacts (via the N-terminal and the central portion of the protein) with EMX1. Interacts with GLI3; the interaction associateS EMX1 with GLI3. Interacts with TBC1D23; this interaction may be indirect and recruits TBC1D23 to AP-1-derived vesicles. As to expression, ubiquitous.

It localises to the cytoplasm. The protein resides in the cytoskeleton. Its subcellular location is the cilium basal body. It is found in the nucleus. The protein localises to the cilium axoneme. It localises to the cytoplasmic vesicle. The protein resides in the golgi apparatus. Its subcellular location is the trans-Golgi network. Its function is as follows. Involved in the Hedgehog (Hh) signaling pathway, is essential for normal ciliogenesis. Regulates the proteolytic processing of GLI3 and cooperates with the transcription factor EMX1 in the induction of downstream Hh pathway gene expression and gonadotropin-releasing hormone production. WDR11 complex facilitates the tethering of Adaptor protein-1 complex (AP-1)-derived vesicles. WDR11 complex acts together with TBC1D23 to facilitate the golgin-mediated capture of vesicles generated using AP-1. The sequence is that of WD repeat-containing protein 11 (WDR11) from Homo sapiens (Human).